A 408-amino-acid polypeptide reads, in one-letter code: Histidine--tRNA ligase (408 aa).

It belongs to the class-II aminoacyl-tRNA synthetase family. In terms of assembly, homodimer.

Its subcellular location is the cytoplasm. The enzyme catalyses tRNA(His) + L-histidine + ATP = L-histidyl-tRNA(His) + AMP + diphosphate + H(+). The polypeptide is Histidine--tRNA ligase (Wolbachia pipientis wMel).